The sequence spans 223 residues: NLP effector protein 2 (223 aa).

Positions 90 to 100 (AIMYSWYFPKD) match the Conserved undecapeptide motif motif. The short motif at 107–113 (GHRHDWE) is the Conserved p motif element.

It belongs to the Necrosis inducing protein (NPP1) family.

Its subcellular location is the secreted. The protein localises to the host cytoplasm. In terms of biological role, probable secreted effector that may act as a pathogen-associated molecular pattern (PAMP) recognized by the plant immune system. Seems not to induce necrosis, neither in several susceptible or resistant Vitis species nor in the dicot model plant Nicotiana benthamiana. This is NLP effector protein 2 from Plasmopara viticola (Downy mildew of grapevine).